The primary structure comprises 1026 residues: Multidrug resistance protein MdtC (1026 aa).

Transmembrane regions (helical) follow at residues 15 to 35 (ILIA…LPVA), 333 to 353 (EVEE…FLFL), 360 to 380 (LIPA…MYLC), 387 to 407 (LSLM…IVVL), 431 to 451 (VGFT…PLLL), 463 to 483 (FAVT…TLTP), 528 to 548 (LVGV…IAIP), 853 to 873 (LILI…LYES), 897 to 917 (LFNA…IGIV), 953 to 973 (PIMM…LSGG), and 984 to 1004 (ITIV…TPVV).

It belongs to the resistance-nodulation-cell division (RND) (TC 2.A.6) family. MdtC subfamily. In terms of assembly, part of a tripartite efflux system composed of MdtA, MdtB and MdtC. MdtC forms a heteromultimer with MdtB.

The protein resides in the cell inner membrane. The polypeptide is Multidrug resistance protein MdtC (Salmonella newport (strain SL254)).